A 235-amino-acid chain; its full sequence is Small ribosomal subunit protein uS3 (235 aa).

The 69-residue stretch at 39–107 (VRKFLNKELM…PAQINIAEVK (69 aa)) folds into the KH type-2 domain.

Belongs to the universal ribosomal protein uS3 family. In terms of assembly, part of the 30S ribosomal subunit. Forms a tight complex with proteins S10 and S14.

Functionally, binds the lower part of the 30S subunit head. Binds mRNA in the 70S ribosome, positioning it for translation. In Actinobacillus succinogenes (strain ATCC 55618 / DSM 22257 / CCUG 43843 / 130Z), this protein is Small ribosomal subunit protein uS3.